A 221-amino-acid chain; its full sequence is UPF0502 protein CPS_0106 (221 aa).

This sequence belongs to the UPF0502 family.

This is UPF0502 protein CPS_0106 from Colwellia psychrerythraea (strain 34H / ATCC BAA-681) (Vibrio psychroerythus).